Here is a 152-residue protein sequence, read N- to C-terminus: Nucleoside diphosphate kinase B (152 aa).

The interval 1–66 is interaction with AKAP13; sequence MAHQERTFIA…DRPFYPGLVK (66 aa). Positions 12, 60, 88, 94, 105, and 115 each coordinate ATP. His-118 (pros-phosphohistidine intermediate) is an active-site residue.

The protein belongs to the NDK family. As to quaternary structure, hexamer of two different chains: An and B (A6, A5B, A4B2, A3B3, A2B4, AB5, B6). Interacts with CAPN8. Interacts with AKAP13. Interacts with ITGB1BP1 (via C-terminal domain region). Interacts with BCL2L10. It depends on Mg(2+) as a cofactor. Ubiquitous.

Its subcellular location is the cytoplasm. The protein localises to the cell projection. It is found in the lamellipodium. It localises to the ruffle. The protein resides in the nucleus. The enzyme catalyses a 2'-deoxyribonucleoside 5'-diphosphate + ATP = a 2'-deoxyribonucleoside 5'-triphosphate + ADP. It catalyses the reaction a ribonucleoside 5'-diphosphate + ATP = a ribonucleoside 5'-triphosphate + ADP. It carries out the reaction ATP + protein L-histidine = ADP + protein N-phospho-L-histidine.. In terms of biological role, major role in the synthesis of nucleoside triphosphates other than ATP. The ATP gamma phosphate is transferred to the NDP beta phosphate via a ping-pong mechanism, using a phosphorylated active-site intermediate. Negatively regulates Rho activity by interacting with AKAP13/LBC. Acts as a transcriptional activator of the MYC gene; binds DNA non-specifically. Binds to both single-stranded guanine- and cytosine-rich strands within the nuclease hypersensitive element (NHE) III(1) region of the MYC gene promoter. Does not bind to duplex NHE III(1). Has G-quadruplex (G4) DNA-binding activity, which is independent of its nucleotide-binding and kinase activity. Binds both folded and unfolded G4 with similar low nanomolar affinities. Stabilizes folded G4s regardless of whether they are prefolded or not. Exhibits histidine protein kinase activity. This Canis lupus familiaris (Dog) protein is Nucleoside diphosphate kinase B (NME2).